Reading from the N-terminus, the 426-residue chain is 3-phosphoshikimate 1-carboxyvinyltransferase (426 aa).

The 3-phosphoshikimate site is built by lysine 22, serine 23, and arginine 27. Residue lysine 22 participates in phosphoenolpyruvate binding. 2 residues coordinate phosphoenolpyruvate: glycine 96 and arginine 124. 7 residues coordinate 3-phosphoshikimate: serine 170, serine 171, glutamine 172, serine 198, aspartate 314, asparagine 337, and lysine 341. Glutamine 172 lines the phosphoenolpyruvate pocket. The active-site Proton acceptor is aspartate 314. Arginine 345, arginine 387, and lysine 412 together coordinate phosphoenolpyruvate.

This sequence belongs to the EPSP synthase family. As to quaternary structure, monomer.

The protein resides in the cytoplasm. The catalysed reaction is 3-phosphoshikimate + phosphoenolpyruvate = 5-O-(1-carboxyvinyl)-3-phosphoshikimate + phosphate. Its pathway is metabolic intermediate biosynthesis; chorismate biosynthesis; chorismate from D-erythrose 4-phosphate and phosphoenolpyruvate: step 6/7. Its function is as follows. Catalyzes the transfer of the enolpyruvyl moiety of phosphoenolpyruvate (PEP) to the 5-hydroxyl of shikimate-3-phosphate (S3P) to produce enolpyruvyl shikimate-3-phosphate and inorganic phosphate. In Shewanella sediminis (strain HAW-EB3), this protein is 3-phosphoshikimate 1-carboxyvinyltransferase.